A 524-amino-acid polypeptide reads, in one-letter code: Hydroxysteroid dehydrogenase-like protein 2 (524 aa).

Residues 17–23 (GASRGIG), lysine 42, and aspartate 74 each bind NADP(+). An N6-(2-hydroxyisobutyryl)lysine modification is found at lysine 42. Lysine 116 carries the post-translational modification N6-acetyllysine. The active-site Proton acceptor is the tyrosine 168. Residue lysine 172 participates in NADP(+) binding. Basic and acidic residues predominate over residues 283–300 (EEKESYDPVPEVKEEKLQ). The tract at residues 283 to 410 (EEKESYDPVP…PLLQSVLPPK (128 aa)) is disordered. Residues 301 to 391 (LQEQPQLQEQ…QQQPQQRPQQ (91 aa)) show a composition bias toward low complexity. Residues 414–521 (GAVEETFRIV…KLEKLMTHMN (108 aa)) enclose the SCP2 domain. N6-succinyllysine is present on lysine 424.

This sequence belongs to the short-chain dehydrogenases/reductases (SDR) family.

The protein resides in the peroxisome. Its subcellular location is the mitochondrion. In terms of biological role, has apparently no steroid dehydrogenase activity. Controls bile acid (BA) and lipid metabolism in response to nutritional cues. In Rattus norvegicus (Rat), this protein is Hydroxysteroid dehydrogenase-like protein 2 (Hsdl2).